The primary structure comprises 274 residues: Formamidopyrimidine-DNA glycosylase (274 aa).

Pro2 acts as the Schiff-base intermediate with DNA in catalysis. The active-site Proton donor is Glu3. The Proton donor; for beta-elimination activity role is filled by Lys56. 3 residues coordinate DNA: His89, Arg107, and Lys148. The segment at 233–267 (LAYGRAREMCVNCETTLENLKLGQRASVFCPQCQP) adopts an FPG-type zinc-finger fold. Arg257 (proton donor; for delta-elimination activity) is an active-site residue.

It belongs to the FPG family. Monomer. The cofactor is Zn(2+).

It catalyses the reaction Hydrolysis of DNA containing ring-opened 7-methylguanine residues, releasing 2,6-diamino-4-hydroxy-5-(N-methyl)formamidopyrimidine.. The enzyme catalyses 2'-deoxyribonucleotide-(2'-deoxyribose 5'-phosphate)-2'-deoxyribonucleotide-DNA = a 3'-end 2'-deoxyribonucleotide-(2,3-dehydro-2,3-deoxyribose 5'-phosphate)-DNA + a 5'-end 5'-phospho-2'-deoxyribonucleoside-DNA + H(+). Involved in base excision repair of DNA damaged by oxidation or by mutagenic agents. Acts as a DNA glycosylase that recognizes and removes damaged bases. Has a preference for oxidized purines, such as 7,8-dihydro-8-oxoguanine (8-oxoG). Has AP (apurinic/apyrimidinic) lyase activity and introduces nicks in the DNA strand. Cleaves the DNA backbone by beta-delta elimination to generate a single-strand break at the site of the removed base with both 3'- and 5'-phosphates. In Acinetobacter baumannii (strain SDF), this protein is Formamidopyrimidine-DNA glycosylase.